Consider the following 123-residue polypeptide: Large ribosomal subunit protein mL52 (123 aa).

Residues 1–23 (MAALGTVLFTGVRRLHCSVAAWA) constitute a mitochondrion transit peptide. Residues 99 to 109 (QEEQRKQENAL) show a composition bias toward basic and acidic residues. Positions 99–123 (QEEQRKQENALKPKGASLKSPLPSQ) are disordered.

It belongs to the mitochondrion-specific ribosomal protein mL52 family. Component of the mitochondrial large ribosomal subunit (mt-LSU). Mature mammalian 55S mitochondrial ribosomes consist of a small (28S) and a large (39S) subunit. The 28S small subunit contains a 12S ribosomal RNA (12S mt-rRNA) and 30 different proteins. The 39S large subunit contains a 16S rRNA (16S mt-rRNA), a copy of mitochondrial valine transfer RNA (mt-tRNA(Val)), which plays an integral structural role, and 52 different proteins. mL52 connects the central protuberance to the body of the ribosome.

Its subcellular location is the mitochondrion. The protein is Large ribosomal subunit protein mL52 (MRPL52) of Homo sapiens (Human).